We begin with the raw amino-acid sequence, 218 residues long: Peptide methionine sulfoxide reductase MsrA (218 aa).

The active site involves Cys-57.

It belongs to the MsrA Met sulfoxide reductase family.

The catalysed reaction is L-methionyl-[protein] + [thioredoxin]-disulfide + H2O = L-methionyl-(S)-S-oxide-[protein] + [thioredoxin]-dithiol. It carries out the reaction [thioredoxin]-disulfide + L-methionine + H2O = L-methionine (S)-S-oxide + [thioredoxin]-dithiol. Functionally, has an important function as a repair enzyme for proteins that have been inactivated by oxidation. Catalyzes the reversible oxidation-reduction of methionine sulfoxide in proteins to methionine. The protein is Peptide methionine sulfoxide reductase MsrA of Brucella melitensis biotype 1 (strain ATCC 23456 / CCUG 17765 / NCTC 10094 / 16M).